The following is a 466-amino-acid chain: Small RNA degrading nuclease 2 (466 aa).

The Exonuclease domain maps to 142–298 (MIAIDCEMVL…HDAEAAMKLV (157 aa)). Positions 426–466 (EENNASSKKRKRENHSKGTRDRRRCKPLSRRKQRSNVKRRR) are disordered. Over residues 445-466 (RDRRRCKPLSRRKQRSNVKRRR) the composition is skewed to basic residues.

This sequence belongs to the REXO1/REXO3 family.

It localises to the nucleus. 3'-5' exonuclease degrading single-stranded small RNAs. The sequence is that of Small RNA degrading nuclease 2 (SDN2) from Arabidopsis thaliana (Mouse-ear cress).